The following is a 307-amino-acid chain: Aspartate carbamoyltransferase catalytic subunit (307 aa).

The carbamoyl phosphate site is built by arginine 58 and threonine 59. Lysine 86 is an L-aspartate binding site. The carbamoyl phosphate site is built by arginine 108, histidine 138, and glutamine 141. The L-aspartate site is built by arginine 171 and arginine 223. Carbamoyl phosphate contacts are provided by alanine 264 and proline 265.

It belongs to the aspartate/ornithine carbamoyltransferase superfamily. ATCase family. In terms of assembly, heterododecamer (2C3:3R2) of six catalytic PyrB chains organized as two trimers (C3), and six regulatory PyrI chains organized as three dimers (R2).

The enzyme catalyses carbamoyl phosphate + L-aspartate = N-carbamoyl-L-aspartate + phosphate + H(+). It participates in pyrimidine metabolism; UMP biosynthesis via de novo pathway; (S)-dihydroorotate from bicarbonate: step 2/3. In terms of biological role, catalyzes the condensation of carbamoyl phosphate and aspartate to form carbamoyl aspartate and inorganic phosphate, the committed step in the de novo pyrimidine nucleotide biosynthesis pathway. The chain is Aspartate carbamoyltransferase catalytic subunit from Streptococcus suis (strain 98HAH33).